A 206-amino-acid chain; its full sequence is Probable metallo-hydrolase MJ0888 (206 aa).

Zn(2+) is bound by residues H55, H57, D59, H60, H130, D147, and H190.

Belongs to the metallo-beta-lactamase superfamily. The cofactor is Zn(2+).

The polypeptide is Probable metallo-hydrolase MJ0888 (Methanocaldococcus jannaschii (strain ATCC 43067 / DSM 2661 / JAL-1 / JCM 10045 / NBRC 100440) (Methanococcus jannaschii)).